A 212-amino-acid polypeptide reads, in one-letter code: Pyridoxine/pyridoxamine 5'-phosphate oxidase (212 aa).

Substrate-binding positions include 8-11 (RREY) and lysine 66. FMN-binding positions include 61–66 (RIVLLK), 76–77 (FT), arginine 82, lysine 83, and glutamine 105. Residues tyrosine 123, arginine 127, and serine 131 each contribute to the substrate site. FMN is bound by residues 140-141 (QS) and tryptophan 185. 191-193 (RLH) contacts substrate. FMN is bound at residue arginine 195.

It belongs to the pyridoxamine 5'-phosphate oxidase family. Homodimer. FMN is required as a cofactor.

It catalyses the reaction pyridoxamine 5'-phosphate + O2 + H2O = pyridoxal 5'-phosphate + H2O2 + NH4(+). It carries out the reaction pyridoxine 5'-phosphate + O2 = pyridoxal 5'-phosphate + H2O2. Its pathway is cofactor metabolism; pyridoxal 5'-phosphate salvage; pyridoxal 5'-phosphate from pyridoxamine 5'-phosphate: step 1/1. It participates in cofactor metabolism; pyridoxal 5'-phosphate salvage; pyridoxal 5'-phosphate from pyridoxine 5'-phosphate: step 1/1. Its function is as follows. Catalyzes the oxidation of either pyridoxine 5'-phosphate (PNP) or pyridoxamine 5'-phosphate (PMP) into pyridoxal 5'-phosphate (PLP). The protein is Pyridoxine/pyridoxamine 5'-phosphate oxidase of Shewanella amazonensis (strain ATCC BAA-1098 / SB2B).